A 611-amino-acid polypeptide reads, in one-letter code: Elongation factor 4 (611 aa).

Residues 12 to 193 (AVIRNFCIIA…TIVAKVPAPE (182 aa)) form the tr-type G domain. GTP contacts are provided by residues 24 to 29 (DHGKST) and 140 to 143 (NKID).

This sequence belongs to the TRAFAC class translation factor GTPase superfamily. Classic translation factor GTPase family. LepA subfamily.

The protein resides in the cell membrane. It catalyses the reaction GTP + H2O = GDP + phosphate + H(+). Required for accurate and efficient protein synthesis under certain stress conditions. May act as a fidelity factor of the translation reaction, by catalyzing a one-codon backward translocation of tRNAs on improperly translocated ribosomes. Back-translocation proceeds from a post-translocation (POST) complex to a pre-translocation (PRE) complex, thus giving elongation factor G a second chance to translocate the tRNAs correctly. Binds to ribosomes in a GTP-dependent manner. The sequence is that of Elongation factor 4 from Cutibacterium acnes (strain DSM 16379 / KPA171202) (Propionibacterium acnes).